Here is a 688-residue protein sequence, read N- to C-terminus: MARTPVSPPATSAPAERAAWLRAELERANYAYYVLDQPDLPDAEYDRLFKELESIETEHPDLIVPDSPTQRVGGEAASGFEPVVHEQPMLSLNNGFADEDIVAFDKRVGDALGKNASEPPVPVEYAAELKFDGLAISLRYVDGVFVQASTRGDGTTGENVTENVRTIRSIPLRLKGKRVPHVLDVRGEVLMFKRDFERLNERQRAAEQKEFANPRNAAAGSLRQLDSKITAQRPLSFFSYGIGVLEGMDMPATHSELLDWYKELGLPVNGERAVVHGAEGLLGFFHAVGEKREKLPYDIDGVVYKVNRRDEQEALGFVSRAPRFALAHKFPAQEALTRLVAIDVQVGRTGAVTPVARLEPVFVGGATVTNATLHNEDEVRRKDIRIGDTVIVRRAGDVIPEVVSALLDRRPDDAREFVMPTHCPVCGSNIERLPDEAIARCTGGLFCPAQRKQALWHFAQRRALDIDGLGEKIIDQLVEQNLVRTPADLFNLGFATLAELDRFAEKSAQNLLDSLEKAKHTTLARFIYALGIRHVGESTAKDLAKHFGSLDPIMDASVEALLEVNDVGPVVAESIHQFFAEEHNRTVIEQLRAPGRVTWPEGPPAPKAPQGVLAGKTVVLTGTLPSLAREEAKEMLEAAGAKVAGSVSKKTDYVVAGAEAGSKLAKAEELGIPVLDEDGMRKLLEGQL.

Residues 42 to 46 (DAEYD), 91 to 92 (SL), and Glu-128 contribute to the NAD(+) site. Residue Lys-130 is the N6-AMP-lysine intermediate of the active site. Arg-151, Glu-188, Lys-305, and Lys-329 together coordinate NAD(+). Zn(2+)-binding residues include Cys-423, Cys-426, Cys-441, and Cys-447. The BRCT domain occupies 608-688 (APQGVLAGKT…GMRKLLEGQL (81 aa)).

Belongs to the NAD-dependent DNA ligase family. LigA subfamily. It depends on Mg(2+) as a cofactor. Mn(2+) is required as a cofactor.

The catalysed reaction is NAD(+) + (deoxyribonucleotide)n-3'-hydroxyl + 5'-phospho-(deoxyribonucleotide)m = (deoxyribonucleotide)n+m + AMP + beta-nicotinamide D-nucleotide.. Functionally, DNA ligase that catalyzes the formation of phosphodiester linkages between 5'-phosphoryl and 3'-hydroxyl groups in double-stranded DNA using NAD as a coenzyme and as the energy source for the reaction. It is essential for DNA replication and repair of damaged DNA. The protein is DNA ligase of Paraburkholderia xenovorans (strain LB400).